A 131-amino-acid polypeptide reads, in one-letter code: Small ribosomal subunit protein uS11 (131 aa).

This sequence belongs to the universal ribosomal protein uS11 family. Part of the 30S ribosomal subunit. Interacts with proteins S7 and S18. Binds to IF-3. Interacts with VmlR. Interacts with BrxC.

Its function is as follows. Located on the platform of the 30S subunit, it bridges several disparate RNA helices of the 16S rRNA. Forms part of the Shine-Dalgarno cleft in the 70S ribosome. This chain is Small ribosomal subunit protein uS11, found in Bacillus subtilis (strain 168).